Here is a 1235-residue protein sequence, read N- to C-terminus: N-acetylglucosamine-1-phosphotransferase subunits alpha/beta (1235 aa).

A helical transmembrane segment spans residues 22-42 (VCFVGVVVTIVSAFQFGEVVL). 4 N-linked (GlcNAc...) asparagine glycosylation sites follow: N83, N114, N148, and N179. 4 disulfide bridges follow: C438/C461, C452/C468, C505/C528, and C519/C535. LNR repeat units lie at residues 438–473 (CAEG…GNTA) and 505–545 (CNQG…ELYK). Ca(2+)-binding residues include D449, D464, D467, D516, D531, and D534. 2 N-linked (GlcNAc...) asparagine glycosylation sites follow: N614 and N729. Positions 699–823 (NISLLPKEAQ…AQPTLGVTVS (125 aa)) constitute a DMAP1-binding domain. Disordered regions lie at residues 751-783 (QART…HRSE) and 830-850 (LIVP…AEGN). Basic and acidic residues predominate over residues 837–848 (HLPKEEESDRAE). Residues 984 to 1019 (VQPLNISQVFHEVDTDQSGVLSDREIRTLATRIHDL) form the EF-hand domain. Residue N988 is glycosylated (N-linked (GlcNAc...) asparagine). Ca(2+) is bound by residues D997, D999, S1001, and E1008. N1108 carries an N-linked (GlcNAc...) asparagine glycan. A helical transmembrane segment spans residues 1194 to 1214 (VLATLIIFTIFSFFAEQIIAL).

The protein belongs to the stealth family. In terms of assembly, hexamer of two alpha, two beta and two gamma (GNPTG) subunits; disulfide-linked. The alpha and/or the beta subunits of the enzyme constitute the catalytic subunits. Interacts with LYSET; facilitates proper localization of GNPTAB. In terms of processing, the alpha- and beta-subunits are generated by a proteolytic cleavage by MBTPS1 protease at the Lys-907-Asp-908 bond.

It localises to the golgi apparatus membrane. It carries out the reaction N(4)-[alpha-D-mannosyl-(1-&gt;2)-alpha-D-mannosyl-(glycan)]-L-asparaginyl-[protein] + UDP-N-acetyl-alpha-D-glucosamine = N(4)-[6-(N-acetyl-alpha-D-glucosaminyl-1-phospho)-alpha-D-mannosyl-(1-&gt;2)-alpha-D-mannosyl-(glycan)]-L-asparaginyl-[protein] + UMP + H(+). Its function is as follows. Catalyzes the formation of mannose 6-phosphate (M6P) markers on high mannose type oligosaccharides in the Golgi apparatus. M6P residues are required to bind to the M6P receptors (MPR), which mediate the vesicular transport of lysosomal enzymes to the endosomal/prelysosomal compartment. The sequence is that of N-acetylglucosamine-1-phosphotransferase subunits alpha/beta (Gnptab) from Mus musculus (Mouse).